We begin with the raw amino-acid sequence, 305 residues long: Glycine cleavage system transcriptional activator (305 aa).

Positions 6–63 constitute an HTH lysR-type domain; sequence PPLNALRVFDAAARHLSFTRAAEELFVTQAAVSHQIKSLEDFLGLKLFRRRNRSLLLT. Residues 23 to 42 constitute a DNA-binding region (H-T-H motif); it reads FTRAAEELFVTQAAVSHQIK.

This sequence belongs to the LysR transcriptional regulatory family.

Its subcellular location is the cytoplasm. In terms of biological role, regulatory protein for the glycine cleavage system operon (gcv). Mediates activation of gcv by glycine and repression by purines. GcvA is negatively autoregulated. Binds to three sites upstream of the gcv promoter. The sequence is that of Glycine cleavage system transcriptional activator (gcvA) from Escherichia coli O157:H7.